A 94-amino-acid chain; its full sequence is Gibberellin-regulated protein 11 (94 aa).

A signal peptide spans 1–23 (MAVFRVLLASLLISLLVLDFVHA).

This sequence belongs to the GASA family. Six disulfide bonds may be present.

Its subcellular location is the secreted. Functionally, gibberellin-regulated protein that may function in hormonal controlled steps of development such as seed germination, flowering and seed maturation. The protein is Gibberellin-regulated protein 11 (GASA11) of Arabidopsis thaliana (Mouse-ear cress).